We begin with the raw amino-acid sequence, 207 residues long: Dephospho-CoA kinase (207 aa).

In terms of domain architecture, DPCK spans 10–207 (ILGLTGGIGS…FYLTLKGGQP (198 aa)). 18–23 (GSGKSA) contacts ATP.

The protein belongs to the CoaE family.

Its subcellular location is the cytoplasm. It catalyses the reaction 3'-dephospho-CoA + ATP = ADP + CoA + H(+). It functions in the pathway cofactor biosynthesis; coenzyme A biosynthesis; CoA from (R)-pantothenate: step 5/5. Functionally, catalyzes the phosphorylation of the 3'-hydroxyl group of dephosphocoenzyme A to form coenzyme A. This chain is Dephospho-CoA kinase, found in Pseudomonas putida (strain ATCC 47054 / DSM 6125 / CFBP 8728 / NCIMB 11950 / KT2440).